A 279-amino-acid polypeptide reads, in one-letter code: Presqualene diphosphate synthase (279 aa).

This sequence belongs to the phytoene/squalene synthase family. HpnD subfamily.

It catalyses the reaction 2 (2E,6E)-farnesyl diphosphate = presqualene diphosphate + diphosphate. It participates in secondary metabolite biosynthesis; hopanoid biosynthesis. In terms of biological role, involved in the biosynthesis of the hopanoid precursor squalene (SQ) from farnesyl diphosphate (FPP). Catalyzes the first step, the formation of presqualene diphosphate (PSPP) from two molecules of FPP. In Sinorhizobium fredii (strain NBRC 101917 / NGR234), this protein is Presqualene diphosphate synthase.